Consider the following 769-residue polypeptide: Serine protease HtrA-like (769 aa).

The segment covering 1–20 (MDIGKKHVIPKSQYRRKRRE) has biased composition (basic residues). The disordered stretch occupies residues 1–390 (MDIGKKHVIP…ATSKLNKGRA (390 aa)). Basic and acidic residues-rich tracts occupy residues 21 to 64 (FFHN…ERFK) and 71 to 108 (LEQR…DVSK). Polar residues predominate over residues 126 to 137 (YEQNSEATLSTK). Residues 138-186 (STDKVESTEMRKLSSDKNKVGHEEQHVLSKPSEHDKETRIDSESSRTDS) show a composition bias toward basic and acidic residues. Positions 247-262 (QQSQNEQTKTYTYGDS) are enriched in polar residues. 2 stretches are compositionally biased toward basic and acidic residues: residues 264–296 (QNDK…HIVD) and 310–330 (KTDD…HKQN). Positions 331–347 (ADSSETVGYQSQSTASH) are enriched in polar residues. Basic and acidic residues predominate over residues 348–364 (RSTEKRNISINDHDKLN). Residues 365–390 (GQKTNTKTSANNNQKKATSKLNKGRA) show a composition bias toward polar residues. Residues 410-430 (LVILMGIIILIVILNAIFNNV) traverse the membrane as a helical segment. Catalysis depends on charge relay system residues His-504, Asp-534, and Ser-619. Positions 680 to 733 (IASLNSFERQAVKLPGKVKNGVVVDQVDNNGLADQSGLKKGDVITELDGKLLED) constitute a PDZ domain.

Belongs to the peptidase S1C family.

The protein resides in the cell membrane. This Staphylococcus aureus (strain USA300) protein is Serine protease HtrA-like.